The following is a 499-amino-acid chain: Chitinase B (499 aa).

The first 41 residues, 1 to 41 (MSTRKAVIGYYFIPTNQINNYTETDTSVVPFPVSNITPAKA), serve as a signal peptide directing secretion. One can recognise a GH18 domain in the interval 42–425 (KQLTHINFSF…AALDRYFNAA (384 aa)). Residues 68-69 (DA) and 95-98 (GGWY) each bind chitin. The Proton donor role is filled by Glu144. Residues Tyr145, 212-215 (MTYD), and Trp403 contribute to the chitin site. The 61-residue stretch at 438-498 (LRYTGVGPGN…DSAWLKVGRL (61 aa)) folds into the Chitin-binding type-3 domain.

This sequence belongs to the glycosyl hydrolase 18 family. Chitinase class II subfamily.

It carries out the reaction Random endo-hydrolysis of N-acetyl-beta-D-glucosaminide (1-&gt;4)-beta-linkages in chitin and chitodextrins.. This Serratia marcescens protein is Chitinase B (chiB).